The following is a 91-amino-acid chain: Small ribosomal subunit protein uS19c (91 aa).

It belongs to the universal ribosomal protein uS19 family.

The protein localises to the plastid. Its subcellular location is the organellar chromatophore. Protein S19 forms a complex with S13 that binds strongly to the 16S ribosomal RNA. The protein is Small ribosomal subunit protein uS19c of Paulinella chromatophora.